A 600-amino-acid polypeptide reads, in one-letter code: DNA mismatch repair protein MutL (600 aa).

The segment at 348-375 (QPQAQRPQTAWSAETSPFRPYQPTTGFS) is disordered. The span at 349-362 (PQAQRPQTAWSAET) shows a compositional bias: polar residues.

Belongs to the DNA mismatch repair MutL/HexB family.

Its function is as follows. This protein is involved in the repair of mismatches in DNA. It is required for dam-dependent methyl-directed DNA mismatch repair. May act as a 'molecular matchmaker', a protein that promotes the formation of a stable complex between two or more DNA-binding proteins in an ATP-dependent manner without itself being part of a final effector complex. This Rhizobium leguminosarum bv. trifolii (strain WSM2304) protein is DNA mismatch repair protein MutL.